The primary structure comprises 166 residues: Transcription antitermination protein NusB (166 aa).

Basic and acidic residues predominate over residues 1 to 18; the sequence is MISDESDRFNPRDPKPAD. Positions 1–30 are disordered; sequence MISDESDRFNPRDPKPADAGKPSKSAKRRE.

This sequence belongs to the NusB family.

Functionally, involved in transcription antitermination. Required for transcription of ribosomal RNA (rRNA) genes. Binds specifically to the boxA antiterminator sequence of the ribosomal RNA (rrn) operons. This is Transcription antitermination protein NusB from Pseudomonas entomophila (strain L48).